Reading from the N-terminus, the 502-residue chain is ATP synthase subunit alpha (502 aa).

The disordered stretch occupies residues 115–135; it reads VDGLGPINTTNTRPIESPAPG. ATP is bound at residue 169-176; sequence GDRQTGKT.

The protein belongs to the ATPase alpha/beta chains family. In terms of assembly, F-type ATPases have 2 components, CF(1) - the catalytic core - and CF(0) - the membrane proton channel. CF(1) has five subunits: alpha(3), beta(3), gamma(1), delta(1), epsilon(1). CF(0) has three main subunits: a(1), b(2) and c(9-12). The alpha and beta chains form an alternating ring which encloses part of the gamma chain. CF(1) is attached to CF(0) by a central stalk formed by the gamma and epsilon chains, while a peripheral stalk is formed by the delta and b chains.

The protein resides in the cell membrane. The enzyme catalyses ATP + H2O + 4 H(+)(in) = ADP + phosphate + 5 H(+)(out). Its function is as follows. Produces ATP from ADP in the presence of a proton gradient across the membrane. The alpha chain is a regulatory subunit. This is ATP synthase subunit alpha from Bacillus cereus (strain B4264).